Reading from the N-terminus, the 518-residue chain is Sensor protein kinase HptS (518 aa).

A run of 2 helical transmembrane segments spans residues 20 to 40 (IFPV…IYIW) and 222 to 242 (GITL…FGFI). Residues 297 to 513 (EQLIHSIEHT…LICYKIPLSR (217 aa)) enclose the Histidine kinase domain. The residue at position 325 (His325) is a Phosphohistidine; by autocatalysis.

Autophosphorylated.

The protein localises to the cell membrane. It carries out the reaction ATP + protein L-histidine = ADP + protein N-phospho-L-histidine.. Member of the two-component regulatory system HptS/HptR that regulates genes involved in hexose phosphate transport system in response to changes in extracellular phosphate sources. May act as a sensor protein kinase which is autophosphorylated at a histidine residue and transfers its phosphate group to the conserved aspartic acid residue in the regulatory domain of HptS. In turn, HptS antagonizes CcpA-dependent transcription of a subset of CcpA-regulated genes involved in antibiotic susceptibility. The sequence is that of Sensor protein kinase HptS (hptS) from Staphylococcus aureus (strain USA300).